Here is a 336-residue protein sequence, read N- to C-terminus: Galectin-12 (336 aa).

Galectin domains follow at residues 49–183 and 212–336; these read YVTT…VGFL and CSHA…CVHS.

Not widely expressed. Predominantly expressed in adipose tissue.

The protein resides in the nucleus. Binds lactose. May participate in the apoptosis of adipocytes. The sequence is that of Galectin-12 (LGALS12) from Homo sapiens (Human).